A 182-amino-acid chain; its full sequence is Oligoribonuclease (182 aa).

Positions 8–171 (LLWLDMEMTG…ADIYESIDEL (164 aa)) constitute an Exonuclease domain. Tyrosine 129 is an active-site residue.

The protein belongs to the oligoribonuclease family.

The protein resides in the cytoplasm. In terms of biological role, 3'-to-5' exoribonuclease specific for small oligoribonucleotides. This is Oligoribonuclease from Thiobacillus denitrificans (strain ATCC 25259 / T1).